Here is a 550-residue protein sequence, read N- to C-terminus: Carboxypeptidase Y homolog A (550 aa).

An N-terminal signal peptide occupies residues 1-17 (MRVLSATLLAGAASAAA). A propeptide spanning residues 18–131 (PPFQQVLGAH…RLEAYNLRAK (114 aa)) is cleaved from the precursor. Intrachain disulfides connect Cys-186/Cys-426, Cys-320/Cys-334, Cys-344/Cys-367, Cys-351/Cys-360, and Cys-389/Cys-396. Asn-217 carries an N-linked (GlcNAc...) asparagine glycan. Ser-273 is an active-site residue. Asp-465 is a catalytic residue. N-linked (GlcNAc...) asparagine glycosylation is present at Asn-516. The active site involves His-527.

The protein belongs to the peptidase S10 family.

It is found in the vacuole. The catalysed reaction is Release of a C-terminal amino acid with broad specificity.. Functionally, vacuolar carboxypeptidase involved in degradation of small peptides. Digests preferentially peptides containing an aliphatic or hydrophobic residue in P1' position, as well as methionine, leucine or phenylalanine in P1 position of ester substrate. This is Carboxypeptidase Y homolog A (cpyA) from Penicillium rubens (strain ATCC 28089 / DSM 1075 / NRRL 1951 / Wisconsin 54-1255) (Penicillium chrysogenum).